Consider the following 440-residue polypeptide: Chromosomal replication initiator protein DnaA (440 aa).

Positions 1–74 are domain I, interacts with DnaA modulators; that stretch reads MNPSQILENL…VQSGNKAIIN (74 aa). Residues 74–99 form a domain II region; sequence NIQAQSTKQSNKSTKIDIAHIQAQST. Residues 100–316 are domain III, AAA+ region; that stretch reads ILNPSFTFES…GIIISLNAYA (217 aa). The ATP site is built by G146, G148, K149, and T150. Residues 317–440 form a domain IV, binds dsDNA region; that stretch reads TILGQEITLE…KNKILIKSQS (124 aa).

It belongs to the DnaA family. Oligomerizes as a right-handed, spiral filament on DNA at oriC.

It is found in the cytoplasm. In terms of biological role, plays an essential role in the initiation and regulation of chromosomal replication. ATP-DnaA binds to the origin of replication (oriC) to initiate formation of the DNA replication initiation complex once per cell cycle. Binds the DnaA box (a 9 base pair repeat at the origin) and separates the double-stranded (ds)DNA. Forms a right-handed helical filament on oriC DNA; dsDNA binds to the exterior of the filament while single-stranded (ss)DNA is stabiized in the filament's interior. The ATP-DnaA-oriC complex binds and stabilizes one strand of the AT-rich DNA unwinding element (DUE), permitting loading of DNA polymerase. After initiation quickly degrades to an ADP-DnaA complex that is not apt for DNA replication. Binds acidic phospholipids. The chain is Chromosomal replication initiator protein DnaA from Campylobacter jejuni subsp. doylei (strain ATCC BAA-1458 / RM4099 / 269.97).